A 261-amino-acid chain; its full sequence is Metallo-beta-lactamase fold-containing protein ST1585 (261 aa).

Residues His58, His60, Asp62, His63, His148, Asp165, and His207 each coordinate Zn(2+).

This sequence belongs to the metallo-beta-lactamase superfamily. In terms of assembly, monomer.

The chain is Metallo-beta-lactamase fold-containing protein ST1585 from Sulfurisphaera tokodaii (strain DSM 16993 / JCM 10545 / NBRC 100140 / 7) (Sulfolobus tokodaii).